Consider the following 302-residue polypeptide: Methionyl-tRNA formyltransferase (302 aa).

A (6S)-5,6,7,8-tetrahydrofolate-binding site is contributed by 103 to 106; sequence SLLP.

The protein belongs to the Fmt family.

It carries out the reaction L-methionyl-tRNA(fMet) + (6R)-10-formyltetrahydrofolate = N-formyl-L-methionyl-tRNA(fMet) + (6S)-5,6,7,8-tetrahydrofolate + H(+). Its function is as follows. Attaches a formyl group to the free amino group of methionyl-tRNA(fMet). The formyl group appears to play a dual role in the initiator identity of N-formylmethionyl-tRNA by promoting its recognition by IF2 and preventing the misappropriation of this tRNA by the elongation apparatus. This chain is Methionyl-tRNA formyltransferase, found in Pseudothermotoga lettingae (strain ATCC BAA-301 / DSM 14385 / NBRC 107922 / TMO) (Thermotoga lettingae).